A 194-amino-acid polypeptide reads, in one-letter code: Imidazoleglycerol-phosphate dehydratase (194 aa).

This sequence belongs to the imidazoleglycerol-phosphate dehydratase family.

The protein localises to the cytoplasm. It catalyses the reaction D-erythro-1-(imidazol-4-yl)glycerol 3-phosphate = 3-(imidazol-4-yl)-2-oxopropyl phosphate + H2O. The protein operates within amino-acid biosynthesis; L-histidine biosynthesis; L-histidine from 5-phospho-alpha-D-ribose 1-diphosphate: step 6/9. This Listeria monocytogenes serotype 4b (strain F2365) protein is Imidazoleglycerol-phosphate dehydratase.